The primary structure comprises 55 residues: uncharacterized protein (55 aa).

A compositionally biased stretch (polar residues) spans 1–15 (MVGQEQLESSPLCQH). The interval 1 to 26 (MVGQEQLESSPLCQHSDNETETKREC) is disordered. Basic and acidic residues predominate over residues 16–26 (SDNETETKREC).

This is an uncharacterized protein from Escherichia coli (strain K12).